A 488-amino-acid polypeptide reads, in one-letter code: N-succinylglutamate 5-semialdehyde dehydrogenase (488 aa).

Residue 221-226 (GSSRTG) participates in NAD(+) binding. Active-site residues include glutamate 244 and cysteine 278.

Belongs to the aldehyde dehydrogenase family. AstD subfamily.

It carries out the reaction N-succinyl-L-glutamate 5-semialdehyde + NAD(+) + H2O = N-succinyl-L-glutamate + NADH + 2 H(+). It participates in amino-acid degradation; L-arginine degradation via AST pathway; L-glutamate and succinate from L-arginine: step 4/5. Functionally, catalyzes the NAD-dependent reduction of succinylglutamate semialdehyde into succinylglutamate. The sequence is that of N-succinylglutamate 5-semialdehyde dehydrogenase from Pseudomonas syringae pv. tomato (strain ATCC BAA-871 / DC3000).